A 398-amino-acid chain; its full sequence is Probable purine permease 17 (398 aa).

Positions 1–26 are disordered; the sequence is MEMSKASKQTTRHEESEHVQNPEPDQ. Positions 11 to 20 are enriched in basic and acidic residues; that stretch reads TRHEESEHVQ. Serine 29 carries the post-translational modification Phosphoserine. The next 10 membrane-spanning stretches (helical) occupy residues 43–63, 88–108, 127–147, 155–175, 183–203, 219–239, 258–278, 301–321, 332–352, and 355–375; these read ISVS…MLLL, WTQA…FFIF, LFFL…LFAL, GIFS…TAII, WIII…PDFG, WLAF…QLGF, VLEM…VGLF, VLSL…MIGL, VVHM…FDFM, and VFSW…GSYF.

It belongs to the purine permeases (TC 2.A.7.14) family.

The protein resides in the membrane. This chain is Probable purine permease 17 (PUP17), found in Arabidopsis thaliana (Mouse-ear cress).